Reading from the N-terminus, the 195-residue chain is Dehydrin DHN1 (195 aa).

The tract at residues 1 to 195 (MAEYGDQYGR…IKEKLPGGHH (195 aa)) is disordered. Over residues 37–48 (YGTTGTTVGYGT) the composition is skewed to low complexity. The span at 50-64 (QCVTTVTTGAQKTDQ) shows a compositional bias: polar residues. Residues 65 to 88 (YGTPGTTGAYGTDQYGTTGTTGEY) show a composition bias toward low complexity. 2 stretches are compositionally biased toward basic and acidic residues: residues 136-153 (KEKI…DDQT) and 173-195 (SPEH…GGHH).

Belongs to the plant dehydrin family. Phosphorylated in vitro by CK2. In terms of tissue distribution, expressed in roots and leaves.

It localises to the cytoplasm. It is found in the nucleus. The chain is Dehydrin DHN1 from Avicennia marina (Grey mangrove).